The chain runs to 124 residues: Ribonuclease pancreatic (124 aa).

The segment covering K1–I13 has biased composition (basic and acidic residues). Residues K1–N24 are disordered. Positions 7 and 10 each coordinate substrate. H12 functions as the Proton acceptor in the catalytic mechanism. A compositionally biased stretch (low complexity) spans S15 to N24. Intrachain disulfides connect C26-C84, C40-C95, C58-C110, and C65-C72. The N-linked (GlcNAc...) asparagine; partial glycan is linked to N34. Residues K41–T45, K66, and R85 each bind substrate. The active-site Proton donor is the H119.

This sequence belongs to the pancreatic ribonuclease family. Monomer. Interacts with and forms tight 1:1 complexes with RNH1. Dimerization of two such complexes may occur. Interaction with RNH1 inhibits this protein. Pancreas.

Its subcellular location is the secreted. It carries out the reaction an [RNA] containing cytidine + H2O = an [RNA]-3'-cytidine-3'-phosphate + a 5'-hydroxy-ribonucleotide-3'-[RNA].. The catalysed reaction is an [RNA] containing uridine + H2O = an [RNA]-3'-uridine-3'-phosphate + a 5'-hydroxy-ribonucleotide-3'-[RNA].. In terms of biological role, endonuclease that catalyzes the cleavage of RNA on the 3' side of pyrimidine nucleotides. Acts on single-stranded and double-stranded RNA. This chain is Ribonuclease pancreatic (RNASE1), found in Antilocapra americana (Pronghorn).